The chain runs to 647 residues: 1-deoxy-D-xylulose-5-phosphate synthase (647 aa).

Residues histidine 74 and 115 to 117 (GHS) each bind thiamine diphosphate. Aspartate 146 contacts Mg(2+). Thiamine diphosphate is bound by residues 147 to 148 (GA), asparagine 175, tyrosine 286, and glutamate 367. Asparagine 175 lines the Mg(2+) pocket.

Belongs to the transketolase family. DXPS subfamily. As to quaternary structure, homodimer. It depends on Mg(2+) as a cofactor. Thiamine diphosphate serves as cofactor.

It catalyses the reaction D-glyceraldehyde 3-phosphate + pyruvate + H(+) = 1-deoxy-D-xylulose 5-phosphate + CO2. It participates in metabolic intermediate biosynthesis; 1-deoxy-D-xylulose 5-phosphate biosynthesis; 1-deoxy-D-xylulose 5-phosphate from D-glyceraldehyde 3-phosphate and pyruvate: step 1/1. Functionally, catalyzes the acyloin condensation reaction between C atoms 2 and 3 of pyruvate and glyceraldehyde 3-phosphate to yield 1-deoxy-D-xylulose-5-phosphate (DXP). The polypeptide is 1-deoxy-D-xylulose-5-phosphate synthase (Heliobacterium modesticaldum (strain ATCC 51547 / Ice1)).